We begin with the raw amino-acid sequence, 780 residues long: ATPase family gene 2 protein (780 aa).

The span at 1–23 shows a compositional bias: low complexity; it reads MAPKSSSSGSKKKSSASSNSADA. Positions 1–26 are disordered; it reads MAPKSSSSGSKKKSSASSNSADAKAS. Residues 286 to 293 and 557 to 564 each bind ATP; these read GPPGTGKT and GPPGCSKT.

Belongs to the AAA ATPase family. AFG2 subfamily. Homohexamer; ATP binding induces oligomerization. Forms a ring-shaped particle of about 12 nm diameter, that displays 6-fold radial symmetry. Associates with cytoplasmic pre-60S ribosomal particles containing ARX1, ALB1, RLP24 and NOG1. Binds to pre-60S ribosomal particles soon after their export from the nucleus and is released before REI1 and LSG1 are incorporated into the particles. Hexameric form interacts with RLP24 (via C-terminal); the interaction recruits AFG2 to pre-60S ribosomal particles and promotes AFG2 ATPase activity and RLP24 release from pre-60S ribosomal particles. Interacts (via N-terminus) with nucleoporin NUP116 (via N-terminus); the interaction is required for RLP24 release from pre-60S ribosomal particles.

It is found in the cytoplasm. The enzyme catalyses ATP + H2O = ADP + phosphate + H(+). Its activity is regulated as follows. The hexamer is activated by RLP24 during pre-60S ribosomal particle maturation; RLP24 activates ATPase activity of both ATP-binding regions and increases cooperativity between AFG2 subunits. The second ATP-binding region is inhibited by diazaborine; the inhibition requires prior ATP binding specifically to the second ATP-binding region. In terms of biological role, ATP-dependent chaperone which uses the energy provided by ATP hydrolysis to generate mechanical force to disassemble protein complexes. Plays an essential role in the cytoplasmic maturation steps of pre-60S ribosomal particles by promoting the release of shuttling protein RLP24 from the pre-ribosomal particles. This step facilitates the subsequent release of other shuttling proteins such as NOG1 and allows the transition of the pre-ribosomal particles to later maturation forms that bind REI1. Essential for viability. The protein is ATPase family gene 2 protein of Saccharomyces cerevisiae (strain ATCC 204508 / S288c) (Baker's yeast).